The primary structure comprises 542 residues: MATRGANVIWFRHGLRLHDNPALLAALADKDQGIALIPVFIFDGESAGTKNVGYNRMRFLLDSLQDIDDQLQAATDGRGRLLVFEGEPAYIFRRLHEQVRLHRICIEQDCEPIWNERDESIRSLCRELNIDFVEKVSHTLWDPQLVIETNGGIPPLTYQMFLHTVQIIGLPPRPTADARLEDATFVELDPEFCRSLKLFEQLPTPEHFNVYGDNMGFLAKINWRGGETQALLLLDERLKVEQHAFERGFYLPNQALPNIHDSPKSMSAHLRFGCLSVRRFYWSVHDLFKNVQLRACVRGVQMTGGAHITGQLIWREYFYTMSVNNPNYDRMEGNDICLSIPWAKPNENLLQSWRLGQTGFPLIDGAMRQLLAEGWLHHTLRNTVATFLTRGGLWQSWEHGLQHFLKYLLDADWSVCAGNWMWVSSSAFERLLDSSLVTCPVALAKRLDPDGTYIKQYVPELMNVPKEFVHEPWRMSAEQQEQYECLIGVHYPERIIDLSMAVKRNMLAMKSLRNSLITPPPHCRPSNEEEVRQFFWLADVVV.

The region spanning 5 to 140 (GANVIWFRHG…DFVEKVSHTL (136 aa)) is the Photolyase/cryptochrome alpha/beta domain. Residues Arg237, Ser265, Ser267, Gln311, His378, 410 to 412 (DAD), Cys416, and Asn419 contribute to the FAD site.

The protein belongs to the DNA photolyase class-1 family. As to quaternary structure, interacts with tim and per; promoted by light conditions. Interaction with tim irreversibly commits tim to proteasomal degradation. Interacts with l(1)G0136/CG8198. FAD serves as cofactor. As to expression, expressed at higher levels in the head than in body and it is more expressed in antennae than in legs, wings and mouth appendages. Prominent expression is seen in cells of the lateral brain, which are close to or coincident with the clock neurons. Abundance oscillates in a circadian manner.

It localises to the cytoplasm. The protein resides in the perinuclear region. Its subcellular location is the nucleus. Blue light-dependent regulator that is the input of the circadian feedback loop. Has no photolyase activity for cyclobutane pyrimidine dimers or 6-4 photoproducts. Regulation of expression by light suggests a role in photoreception for locomotor activity rhythms. Functions, together with per, as a transcriptional repressor required for the oscillation of peripheral circadian clocks and for the correct specification of clock cells. Genes directly activated by the transcription factors Clock (Clk) and cycle (cyc) are repressed by cry. Necessary for light-dependent magnetosensitivity, an intact circadian system is not required for the magnetoreception mechanism to operate. Required for both the naive and trained responses to magnetic field, consistent with the notion that cry is in the input pathway of magnetic sensing. This Drosophila melanogaster (Fruit fly) protein is Cryptochrome-1.